The sequence spans 525 residues: Glutamate--cysteine ligase (525 aa).

This sequence belongs to the glutamate--cysteine ligase type 1 family. Type 1 subfamily.

It catalyses the reaction L-cysteine + L-glutamate + ATP = gamma-L-glutamyl-L-cysteine + ADP + phosphate + H(+). The protein operates within sulfur metabolism; glutathione biosynthesis; glutathione from L-cysteine and L-glutamate: step 1/2. In Vibrio vulnificus (strain CMCP6), this protein is Glutamate--cysteine ligase.